The primary structure comprises 121 residues: Small ribosomal subunit protein uS13 (121 aa).

A disordered region spans residues 89–121 (MRHRRGLPVRGQHTKNNARTRKGKAVSIAGKKK).

It belongs to the universal ribosomal protein uS13 family. As to quaternary structure, part of the 30S ribosomal subunit. Forms a loose heterodimer with protein S19. Forms two bridges to the 50S subunit in the 70S ribosome.

Its function is as follows. Located at the top of the head of the 30S subunit, it contacts several helices of the 16S rRNA. In the 70S ribosome it contacts the 23S rRNA (bridge B1a) and protein L5 of the 50S subunit (bridge B1b), connecting the 2 subunits; these bridges are implicated in subunit movement. Contacts the tRNAs in the A and P-sites. In Levilactobacillus brevis (strain ATCC 367 / BCRC 12310 / CIP 105137 / JCM 1170 / LMG 11437 / NCIMB 947 / NCTC 947) (Lactobacillus brevis), this protein is Small ribosomal subunit protein uS13.